The following is a 316-amino-acid chain: Ribosomal RNA large subunit methyltransferase F (316 aa).

Residues 200 to 222 (EEANKSTSRKVSNLNPKEKKNTN) are disordered. Polar residues predominate over residues 204–214 (KSTSRKVSNLN).

Belongs to the methyltransferase superfamily. METTL16/RlmF family.

Its subcellular location is the cytoplasm. The catalysed reaction is adenosine(1618) in 23S rRNA + S-adenosyl-L-methionine = N(6)-methyladenosine(1618) in 23S rRNA + S-adenosyl-L-homocysteine + H(+). In terms of biological role, specifically methylates the adenine in position 1618 of 23S rRNA. This Flavobacterium johnsoniae (strain ATCC 17061 / DSM 2064 / JCM 8514 / BCRC 14874 / CCUG 350202 / NBRC 14942 / NCIMB 11054 / UW101) (Cytophaga johnsonae) protein is Ribosomal RNA large subunit methyltransferase F.